The chain runs to 253 residues: Toxin PezT (253 aa).

39 to 46 (GQSGAGKT) is a binding site for ATP. The active-site Proton acceptor is aspartate 66.

It belongs to the zeta toxin family. In terms of assembly, forms a PezA(2)PezT(2) heterotetramer. The heterotetramer is much more stable than either of the proteins alone, and a specific mechanism may be necessary to liberate the toxin.

It catalyses the reaction UDP-N-acetyl-alpha-D-glucosamine + ATP = UDP-N-acetyl-alpha-D-glucosamine 3'-phosphate + ADP + H(+). In terms of biological role, toxic component of a type II toxin-antitoxin (TA) system. Phosphorylates UDP-N-acetyl-D-glucosamine (UNAG) on the 3'-hydroxyl group of the N-acetyl-D-glucosamine moiety, yielding UNAG-3P. UNAG-3P inhibits MurA, the first committed step in cell wall synthesis, which is then blocked. Upon expression in E.coli results in decreased cell growth and viability, followed 3 hours later by growth restoration; the toxic effect and phosphorylation of UNAG are neutralized by coexpression with cognate antitoxin PezA. A mutant lacking the last 11 residues is stably maintained in E.coli, unlike the wild-type which undergoes spontaneous mutation. Expression of the deletion mutant in rapidly growing liquid cultures leads to cell bulging, permeabilization and massive lysis by 1 hour. Cells that survive are not able to undergo cytokinesis. Expression in slowly growing cells leads to bulging but not lysis. Acts as a corepressor of its own operon with PezA; it is not clear if it binds DNA alone. The polypeptide is Toxin PezT (pezT) (Streptococcus pneumoniae serotype 4 (strain ATCC BAA-334 / TIGR4)).